The chain runs to 240 residues: uncharacterized protein (240 aa).

Residues 3–27 (LKCLECDKLLSSIEMAEFHSTKTSH) form a C2H2-type zinc finger. 2 disordered regions span residues 21–43 (HSTK…RSPE) and 120–171 (AEIE…RFSI). Positions 120–136 (AEIERDKKRRAAERENK) are enriched in basic and acidic residues. The span at 155–166 (SSSTCTRTPPTS) shows a compositional bias: low complexity.

This is an uncharacterized protein from Schizosaccharomyces pombe (strain 972 / ATCC 24843) (Fission yeast).